Consider the following 185-residue polypeptide: Elongation factor P (185 aa).

It belongs to the elongation factor P family.

The protein localises to the cytoplasm. It participates in protein biosynthesis; polypeptide chain elongation. In terms of biological role, involved in peptide bond synthesis. Stimulates efficient translation and peptide-bond synthesis on native or reconstituted 70S ribosomes in vitro. Probably functions indirectly by altering the affinity of the ribosome for aminoacyl-tRNA, thus increasing their reactivity as acceptors for peptidyl transferase. The sequence is that of Elongation factor P from Burkholderia lata (strain ATCC 17760 / DSM 23089 / LMG 22485 / NCIMB 9086 / R18194 / 383).